The primary structure comprises 528 residues: Phosphoenolpyruvate carboxykinase (ATP) (528 aa).

Arginine 56, tyrosine 192, and lysine 198 together coordinate substrate. ATP is bound by residues lysine 198, histidine 217, and 233–241 (GLSGTGKTT). Lysine 198 and histidine 217 together coordinate Mn(2+). Residue aspartate 254 coordinates Mn(2+). The ATP site is built by glutamate 282, arginine 319, and threonine 444. Residue arginine 319 participates in substrate binding.

It belongs to the phosphoenolpyruvate carboxykinase (ATP) family. Requires Mn(2+) as cofactor.

It localises to the cytoplasm. It catalyses the reaction oxaloacetate + ATP = phosphoenolpyruvate + ADP + CO2. It functions in the pathway carbohydrate biosynthesis; gluconeogenesis. In terms of biological role, involved in the gluconeogenesis. Catalyzes the conversion of oxaloacetate (OAA) to phosphoenolpyruvate (PEP) through direct phosphoryl transfer between the nucleoside triphosphate and OAA. In Bacillus cereus (strain G9842), this protein is Phosphoenolpyruvate carboxykinase (ATP).